The following is a 122-amino-acid chain: Large ribosomal subunit protein uL14 (122 aa).

This sequence belongs to the universal ribosomal protein uL14 family. As to quaternary structure, part of the 50S ribosomal subunit. Forms a cluster with proteins L3 and L19. In the 70S ribosome, L14 and L19 interact and together make contacts with the 16S rRNA in bridges B5 and B8.

Binds to 23S rRNA. Forms part of two intersubunit bridges in the 70S ribosome. This Buchnera aphidicola subsp. Acyrthosiphon pisum (strain 5A) protein is Large ribosomal subunit protein uL14.